The following is a 346-amino-acid chain: Holliday junction branch migration complex subunit RuvB (346 aa).

Positions 4-185 are large ATPase domain (RuvB-L); it reads SDRIITASPF…FGIVSRLEFY (182 aa). ATP-binding positions include L24, R25, G66, K69, T70, T71, 132 to 134, R175, Y185, and R222; that span reads EDY. Position 70 (T70) interacts with Mg(2+). The interval 186-256 is small ATPAse domain (RuvB-S); the sequence is TSDELSKIVT…VADAALQMLD (71 aa). The interval 259–346 is head domain (RuvB-H); sequence AAGLDVLDRK…AATPGLFNPD (88 aa). The DNA site is built by R295, R314, and R319.

The protein belongs to the RuvB family. In terms of assembly, homohexamer. Forms an RuvA(8)-RuvB(12)-Holliday junction (HJ) complex. HJ DNA is sandwiched between 2 RuvA tetramers; dsDNA enters through RuvA and exits via RuvB. An RuvB hexamer assembles on each DNA strand where it exits the tetramer. Each RuvB hexamer is contacted by two RuvA subunits (via domain III) on 2 adjacent RuvB subunits; this complex drives branch migration. In the full resolvosome a probable DNA-RuvA(4)-RuvB(12)-RuvC(2) complex forms which resolves the HJ.

Its subcellular location is the cytoplasm. It catalyses the reaction ATP + H2O = ADP + phosphate + H(+). In terms of biological role, the RuvA-RuvB-RuvC complex processes Holliday junction (HJ) DNA during genetic recombination and DNA repair, while the RuvA-RuvB complex plays an important role in the rescue of blocked DNA replication forks via replication fork reversal (RFR). RuvA specifically binds to HJ cruciform DNA, conferring on it an open structure. The RuvB hexamer acts as an ATP-dependent pump, pulling dsDNA into and through the RuvAB complex. RuvB forms 2 homohexamers on either side of HJ DNA bound by 1 or 2 RuvA tetramers; 4 subunits per hexamer contact DNA at a time. Coordinated motions by a converter formed by DNA-disengaged RuvB subunits stimulates ATP hydrolysis and nucleotide exchange. Immobilization of the converter enables RuvB to convert the ATP-contained energy into a lever motion, pulling 2 nucleotides of DNA out of the RuvA tetramer per ATP hydrolyzed, thus driving DNA branch migration. The RuvB motors rotate together with the DNA substrate, which together with the progressing nucleotide cycle form the mechanistic basis for DNA recombination by continuous HJ branch migration. Branch migration allows RuvC to scan DNA until it finds its consensus sequence, where it cleaves and resolves cruciform DNA. The sequence is that of Holliday junction branch migration complex subunit RuvB from Nitrosomonas eutropha (strain DSM 101675 / C91 / Nm57).